We begin with the raw amino-acid sequence, 765 residues long: ATP-dependent zinc metalloprotease FtsH (765 aa).

The Cytoplasmic segment spans residues 1–27; sequence MSNTSNFNERVTENAKPPKNVKSIIWK. A helical membrane pass occupies residues 28–48; the sequence is TIGIIIVMAIIIGLILFYVLP. Topologically, residues 49-213 are extracellular; it reads RNTIANISNI…NVQLPNQSTA (165 aa). A helical membrane pass occupies residues 214–234; that stretch reads ILTQFLTSIIPFVILIVIYIV. Residues 235 to 765 are Cytoplasmic-facing; that stretch reads IARRFSRTMG…EPTASTASSN (531 aa). Residue 314 to 321 coordinates ATP; the sequence is GPPGTGKT. Histidine 536 is a binding site for Zn(2+). The active site involves glutamate 537. The Zn(2+) site is built by histidine 540 and aspartate 615. Basic and acidic residues predominate over residues 730-748; the sequence is KAAAEKEEQAEKAKLDHQS. A disordered region spans residues 730-765; sequence KAAAEKEEQAEKAKLDHQSDSAQPQEEPTASTASSN. A compositionally biased stretch (polar residues) spans 749–765; that stretch reads DSAQPQEEPTASTASSN.

In the central section; belongs to the AAA ATPase family. This sequence in the C-terminal section; belongs to the peptidase M41 family. As to quaternary structure, homohexamer. Zn(2+) serves as cofactor.

Its subcellular location is the cell membrane. Its function is as follows. Acts as a processive, ATP-dependent zinc metallopeptidase for both cytoplasmic and membrane proteins. Plays a role in the quality control of integral membrane proteins. The chain is ATP-dependent zinc metalloprotease FtsH from Mycoplasmoides gallisepticum (strain R(high / passage 156)) (Mycoplasma gallisepticum).